The chain runs to 447 residues: MKPVIALVGRPNVGKSTLFNRMTRSRDALVADLPGLTRDRHYGEGRIGDRPFIVIDTGGFEPVAKEGIVAEMAKQTRQAVVEADVVIFLVDGRLGLAPQDRVIADYLRKTGRRVMLAINKAEGMKYTSVAADFYELGMGDPYAISSTHGDGVRELVDEALDLAVQERPELADQEDAGQHGVKIAIVGRPNVGKSTLVNTLIGEERVIAFDMPGTTRDAIYVEFERGGKPYTLIDTAGLRKRGKVFEAIEKFSVVKTLQSIADANVVVLLLDAQQDISEQDAHIAGFIVESGRALVVGVNKWDGLDGHQRDRVKHDLERKLQFLSFANIHFVSARERTGIGALLRSVDDAYAAAMIKLPTPQITRVLQEAVEFQQPKRVGVSRPKLRYAHQGGSNPPIIVVHGNALSGVTDAYRRYLENRFRTAFKLKGTPLRIEFRTNKNPYAESKD.

2 EngA-type G domains span residues 3–167 and 181–354; these read PVIA…VQER and VKIA…AAAM. Residues 9 to 16, 56 to 60, 119 to 122, 187 to 194, 234 to 238, and 299 to 302 contribute to the GTP site; these read GRPNVGKS, DTGGF, NKAE, DTAGL, and NKWD. In terms of domain architecture, KH-like spans 355–439; sequence IKLPTPQITR…PLRIEFRTNK (85 aa).

Belongs to the TRAFAC class TrmE-Era-EngA-EngB-Septin-like GTPase superfamily. EngA (Der) GTPase family. As to quaternary structure, associates with the 50S ribosomal subunit.

In terms of biological role, GTPase that plays an essential role in the late steps of ribosome biogenesis. This chain is GTPase Der, found in Cupriavidus metallidurans (strain ATCC 43123 / DSM 2839 / NBRC 102507 / CH34) (Ralstonia metallidurans).